We begin with the raw amino-acid sequence, 174 residues long: Small ribosomal subunit protein uS5 (174 aa).

In terms of domain architecture, S5 DRBM spans 19-82; sequence LREKMIAVNR…EQARRGMFKV (64 aa).

It belongs to the universal ribosomal protein uS5 family. Part of the 30S ribosomal subunit. Contacts proteins S4 and S8.

Its function is as follows. With S4 and S12 plays an important role in translational accuracy. Functionally, located at the back of the 30S subunit body where it stabilizes the conformation of the head with respect to the body. The protein is Small ribosomal subunit protein uS5 of Bordetella bronchiseptica (strain ATCC BAA-588 / NCTC 13252 / RB50) (Alcaligenes bronchisepticus).